Reading from the N-terminus, the 682-residue chain is Probable glycosyl transferase Gly (682 aa).

UDP contacts are provided by residues 21–26 (CASFSD) and 112–113 (DC). D112, D114, and H230 together coordinate Mn(2+). 230–236 (HYLPERK) contributes to the UDP binding site.

The protein belongs to the glycosyltransferase 8 family. As to quaternary structure, part of the accessory SecA2/SecY2 protein translocation apparatus required to export cell wall protein GspB.

Functionally, part of the accessory SecA2/SecY2 system specifically required to export GspB, a serine-rich repeat cell wall protein encoded upstream in the same operon. The chain is Probable glycosyl transferase Gly (gly) from Streptococcus gordonii.